The chain runs to 100 residues: MKISEEEVRHVANLSKLKFSDDETTEFATTLTKIVDMVELLNEVDTQGVPFTSNVADNINYMREDVSVAGWDREQLFKNVPEHEDGLIKVPAIIDEGGDA.

The protein belongs to the GatC family. In terms of assembly, heterotrimer of A, B and C subunits.

The enzyme catalyses L-glutamyl-tRNA(Gln) + L-glutamine + ATP + H2O = L-glutaminyl-tRNA(Gln) + L-glutamate + ADP + phosphate + H(+). It catalyses the reaction L-aspartyl-tRNA(Asn) + L-glutamine + ATP + H2O = L-asparaginyl-tRNA(Asn) + L-glutamate + ADP + phosphate + 2 H(+). In terms of biological role, allows the formation of correctly charged Asn-tRNA(Asn) or Gln-tRNA(Gln) through the transamidation of misacylated Asp-tRNA(Asn) or Glu-tRNA(Gln) in organisms which lack either or both of asparaginyl-tRNA or glutaminyl-tRNA synthetases. The reaction takes place in the presence of glutamine and ATP through an activated phospho-Asp-tRNA(Asn) or phospho-Glu-tRNA(Gln). This chain is Aspartyl/glutamyl-tRNA(Asn/Gln) amidotransferase subunit C, found in Streptococcus mutans serotype c (strain ATCC 700610 / UA159).